Consider the following 243-residue polypeptide: Urease accessory protein UreF (243 aa).

Belongs to the UreF family. UreD, UreF and UreG form a complex that acts as a GTP-hydrolysis-dependent molecular chaperone, activating the urease apoprotein by helping to assemble the nickel containing metallocenter of UreC. The UreE protein probably delivers the nickel.

Its subcellular location is the cytoplasm. Its function is as follows. Required for maturation of urease via the functional incorporation of the urease nickel metallocenter. This Xanthobacter autotrophicus (strain ATCC BAA-1158 / Py2) protein is Urease accessory protein UreF.